Reading from the N-terminus, the 490-residue chain is Cytochrome P450 71A19 (490 aa).

Residues 3–23 form a helical membrane-spanning segment; the sequence is IILVTLCLTTLLALLLLKSIL. C433 is a binding site for heme.

Belongs to the cytochrome P450 family. Requires heme as cofactor.

Its subcellular location is the membrane. The polypeptide is Cytochrome P450 71A19 (CYP71A19) (Arabidopsis thaliana (Mouse-ear cress)).